A 162-amino-acid polypeptide reads, in one-letter code: Transcription elongation factor GreA (162 aa).

The stretch at 45–65 (NAEYHAAKERQLFIEARINEL) forms a coiled coil.

This sequence belongs to the GreA/GreB family.

Its function is as follows. Necessary for efficient RNA polymerase transcription elongation past template-encoded arresting sites. The arresting sites in DNA have the property of trapping a certain fraction of elongating RNA polymerases that pass through, resulting in locked ternary complexes. Cleavage of the nascent transcript by cleavage factors such as GreA or GreB allows the resumption of elongation from the new 3'terminus. GreA releases sequences of 2 to 3 nucleotides. In Wolinella succinogenes (strain ATCC 29543 / DSM 1740 / CCUG 13145 / JCM 31913 / LMG 7466 / NCTC 11488 / FDC 602W) (Vibrio succinogenes), this protein is Transcription elongation factor GreA.